Reading from the N-terminus, the 157-residue chain is Protein Smg (157 aa).

It belongs to the Smg family.

The polypeptide is Protein Smg (Shigella boydii serotype 18 (strain CDC 3083-94 / BS512)).